An 81-amino-acid chain; its full sequence is U-poneritoxin(01)-Om6a (81 aa).

The N-terminal stretch at 1–21 (MRRSYVLLAFAIVLIISIISA) is a signal peptide. The propeptide occupies 22 to 43 (QVEADASSDAFADAVADAVADP). Residue Ala79 is modified to Alanine amide.

It belongs to the formicidae venom precursor-01 superfamily. In terms of processing, truncated sequences of this peptide have also been found in the venom. It is possible they have been cleaved in the venom. In terms of tissue distribution, expressed by the venom gland.

It is found in the secreted. In terms of biological role, cationic amphipathic alpha-helical peptide with antimicrobial activities against E.coli (MIC=3.1), and S.aureus (MIC=3.1 uM). Also shows histamine-releasing activity (33.6% at 10 uM). Does not have activity against S.cerevisiae. Does not show hemolytic activity, even at 50 uM. This Odontomachus monticola (Trap-jaw ant) protein is U-poneritoxin(01)-Om6a.